The chain runs to 379 residues: Putative glutamate--cysteine ligase 2 (379 aa).

Belongs to the glutamate--cysteine ligase type 2 family. YbdK subfamily.

The enzyme catalyses L-cysteine + L-glutamate + ATP = gamma-L-glutamyl-L-cysteine + ADP + phosphate + H(+). In terms of biological role, ATP-dependent carboxylate-amine ligase which exhibits weak glutamate--cysteine ligase activity. In Roseiflexus sp. (strain RS-1), this protein is Putative glutamate--cysteine ligase 2.